Here is a 270-residue protein sequence, read N- to C-terminus: (+)-cis,cis-nepetalactol synthase NEPS3 (270 aa).

Residues 21–27, 46–48, 70–71, Asn97, 165–169, and 198–202 contribute to the NAD(+) site; these read GGASGIG, DIQ, DV, YVMSK, and VATPL.

This sequence belongs to the short-chain dehydrogenases/reductases (SDR) family. In terms of assembly, forms homotetramers.

It carries out the reaction (S)-8-oxocitronellyl enol = cis-cis-nepetalactol. Its function is as follows. Functions as a non-oxidoreductive cyclase to promote the formation of cis-cis-nepetalactol. Cis-cis-nepetalactol is then oxidized by NEPS1 into cis-cis-nepetalactone, which belongs to a family of metabolites that are both insect-repellent and have euphoric effect in cats. Binds NAD(+) as classical short-chain dehydrogenase/reductase (SDR), but does not utilize it for its redox-neutral cyclase activity. This chain is (+)-cis,cis-nepetalactol synthase NEPS3, found in Nepeta racemosa (Catmint).